The primary structure comprises 144 residues: Large ribosomal subunit protein uL15 (144 aa).

Residues 1–57 (MRLNTLSPAAGSKHAPKRVGRGIGSGLGKTGGRGHKGQKSRSGGKVRPGFEGGQMPL) are disordered. Gly residues predominate over residues 21–31 (RGIGSGLGKTG). A compositionally biased stretch (basic residues) spans 32-44 (GRGHKGQKSRSGG).

It belongs to the universal ribosomal protein uL15 family. Part of the 50S ribosomal subunit.

Its function is as follows. Binds to the 23S rRNA. The chain is Large ribosomal subunit protein uL15 from Vibrio vulnificus (strain CMCP6).